The sequence spans 520 residues: Bifunctional dihydrofolate reductase-thymidylate synthase (520 aa).

One can recognise a DHFR domain in the interval 26-229; that stretch reads AFSIVVALDM…LEFEICKYVP (204 aa). Residue Val-30 participates in substrate binding. Residues Ala-32 and 38-44 each bind NADP(+); that span reads GIGDGES. Asp-52 contributes to the substrate binding site. Residues 81-83, 102-105, and 157-164 contribute to the NADP(+) site; these read RKT, LSSK, and GGAQVYAD. Substrate contacts are provided by Tyr-162 and Thr-180. The interval 234 to 520 is thymidylate synthase; that stretch reads ERQYLELIDR…HPAIKMEMAV (287 aa). Arg-254 contributes to the dUMP binding site. The active site involves Cys-400. DUMP contacts are provided by residues His-401, 421-425, Asn-433, and 463-465; these read QRSCD and HVY.

This sequence in the N-terminal section; belongs to the dihydrofolate reductase family. The protein in the C-terminal section; belongs to the thymidylate synthase family.

It carries out the reaction (6S)-5,6,7,8-tetrahydrofolate + NADP(+) = 7,8-dihydrofolate + NADPH + H(+). It catalyses the reaction dUMP + (6R)-5,10-methylene-5,6,7,8-tetrahydrofolate = 7,8-dihydrofolate + dTMP. It functions in the pathway cofactor biosynthesis; tetrahydrofolate biosynthesis; 5,6,7,8-tetrahydrofolate from 7,8-dihydrofolate: step 1/1. In terms of biological role, bifunctional enzyme. Involved in de novo dTMP biosynthesis. Key enzyme in folate metabolism. Catalyzes an essential reaction for de novo glycine and purine synthesis, DNA precursor synthesis, and for the conversion of dUMP to dTMP. The polypeptide is Bifunctional dihydrofolate reductase-thymidylate synthase (Leishmania major).